The primary structure comprises 526 residues: Keratin, type I cytoskeletal 10 (526 aa).

The segment covering 1-16 (MSVRFSSNSRQYSSAR) has biased composition (low complexity). Residues 1 to 40 (MSVRFSSNSRQYSSARSGGGGGGGGGGSSIRVSSTKSSLG) form a disordered region. Residues 1–144 (MSVRFSSNSR…GDGGGLLSGN (144 aa)) form a head region. Ser17, Ser38, Ser49, Ser52, and Ser169 each carry phosphoserine. Residues 17-28 (SGGGGGGGGGGS) show a composition bias toward gly residues. A coil 1A region spans residues 145–180 (EKVTMQNLNDRLASYMNKVRDLEESNYELEGKIKEW). An IF rod domain is found at 145 to 459 (EKVTMQNLND…SLLEGEGGYV (315 aa)). The tract at residues 181–201 (YEKHGNSSQREPRDYSKYYKT) is linker 1. Residues 202–293 (IEDLKGQIVN…KNHEEEMKDL (92 aa)) form a coil 1B region. Positions 294–316 (QNVSTGDVNVEMNAAPGVDLTQL) are linker 12. Residues 317-455 (LNNMRNQYEQ…QTYRSLLEGE (139 aa)) form a coil 2 region. Residues 456–526 (GGYVGNLQIT…IESETKKHFY (71 aa)) are tail.

This sequence belongs to the intermediate filament family. In terms of assembly, heterotetramer of two type I and two type II keratins. Heterodimer with KRT1. Two heterodimers of KRT1 and KRT10 form a heterotetramer. The KRT10 subunit in the heterotetramer is probably disulfide-linked.

Its subcellular location is the secreted. The protein resides in the extracellular space. It localises to the cell surface. The protein localises to the cytoplasm. Functionally, plays a role in the establishment of the epidermal barrier on plantar skin. Involved in the maintenance of cell layer development and keratin filament bundles in suprabasal cells of the epithelium. In Rattus norvegicus (Rat), this protein is Keratin, type I cytoskeletal 10.